We begin with the raw amino-acid sequence, 802 residues long: MKQYNPKEIESKWQNIWEERGVFHASNDKDKEKFYALIEFPYPSGQGLHVGHPRPYTALDVVSRKRRLEGYNVLYPMGWDAFGLPTENYAIKNKIHPKVVTEQNVARFKKQLQGLGMSFDWSREINTTDPEYYKWTQWIFLKLFEKGLAYKKEMSINWCTSCKVGLANEEVVNGGCERCGAEVVRKQKNQWMLKITEYAERLINDLDLVDYIERVKIQQKNWIGKSEGMEVDFEITGGKKITVYTTRPDTLFGSTYMVISPEHPYIEELAAHIQNMDDLVHYREEAAKKSEFERTELVKDKTGVKIEGIEATNPATGKQIPIFISDYVMMSYGTGAIMAVPGHDTRDWEFAKKFNLPIVEVVSGGNVDEAAYTDTEEGIIVNSDFINGMQVKEAKEKISSWLEEKGLGKRKVNYKLRDWVFSRQRYWGEPIPLVHCDCCGWVPVPESQLPVLLPEVESYEPTDNGESPLANLRDWVETTCPKCGGKAERETDTMPQWAGSSWYFLRYTDPHNNEELASKENLDYWMPIDWYNGGMEHTTLHLLYSRFWHKFLYDCGVVPSCEPYQKRTSHGMILGENNEKMSKSRGNVINPDDIVTEFGADTLRLYEMFIGDFEKSVPWSQNGVKGCRRFLDRIWKLQEILVDSQEMTKELEGNIHKTIKKVTEDYETLKFNTAVASMMALINDFYDHGTVTKGDMKTLLTLLNPVAPHITEELWEVLGFEGHIYGTTWPIWDEAKTIDSVVEIPIQINGKVKGQMVISVDFTADQVKEQFRNDERLMALVEGKSIVKEIYVPGKIYNIVVK.

Positions 41–52 match the 'HIGH' region motif; sequence PYPSGQGLHVGH. Positions 580–584 match the 'KMSKS' region motif; it reads KMSKS. An ATP-binding site is contributed by lysine 583.

This sequence belongs to the class-I aminoacyl-tRNA synthetase family.

It localises to the cytoplasm. The enzyme catalyses tRNA(Leu) + L-leucine + ATP = L-leucyl-tRNA(Leu) + AMP + diphosphate. The polypeptide is Leucine--tRNA ligase (Alkaliphilus oremlandii (strain OhILAs) (Clostridium oremlandii (strain OhILAs))).